A 796-amino-acid polypeptide reads, in one-letter code: Inactive dipeptidyl peptidase 10 (796 aa).

At 1-34 (MNQTASVSHHIKCQPSKTIKELGSNSPPQRNWKG) the chain is on the cytoplasmic side. Positions 1–55 (MNQTASVSHHIKCQPSKTIKELGSNSPPQRNWKGIAIALLVILVVCSLITMSVIL) are mediates effects on KCND2. The helical; Signal-anchor for type II membrane protein transmembrane segment at 35 to 55 (IAIALLVILVVCSLITMSVIL) threads the bilayer. The Extracellular portion of the chain corresponds to 56-796 (LTPDELTNSS…VLPQEPEEDE (741 aa)). Residues Asn63, Asn90, Asn111, and Asn119 are each glycosylated (N-linked (GlcNAc...) asparagine). A phosphotyrosine mark is found at Tyr138 and Tyr143. 3 N-linked (GlcNAc...) asparagine glycosylation sites follow: Asn257, Asn342, and Asn748.

This sequence belongs to the peptidase S9B family. DPPIV subfamily. As to quaternary structure, may form oligomers. Interacts with KCND1. Interacts with KCND2. Identified in a complex with KCND2 and KCNIP3. N-glycosylation is important for cell surface expression, specially at Asn-257, which is crucial. As to expression, detected in brain cortex, hippocampus, thalamus and cerebellum Purkinje cells (at protein level).

It localises to the cell membrane. Its function is as follows. Promotes cell surface expression of the potassium channel KCND2. Modulates the activity and gating characteristics of the potassium channel KCND2. Has no dipeptidyl aminopeptidase activity. The chain is Inactive dipeptidyl peptidase 10 (Dpp10) from Rattus norvegicus (Rat).